The sequence spans 353 residues: MVNYSNCHFIRSPIHLENQKFGRRPGQLIKISPKLAQNGLVEVIGLDFLSSHYHALAAIQRLLTATNYKGNTKGVVLSRESNSFQFEGWIPRIRFTKTEFLEAYGVKRYKTSRNKYEFSGKESETALEALYHLGHQPFLIVATRTRWNNGTPILDRYQTLSPIIRIYEGWEGLTDEENTEIDVTPFNSPSTRKHKGFIVEPCPILVDQIDSYFVVKPANVYQEIKMRFPNASRYAYTFIDWIITASAKKKRKLTKENSWPENLSLNVNVKSLAYILRMNRYISTRNWKKIEMAIDKCVEIAIQLGWLSSRKRVEFLEASKLSKKEILYLNKERFEEITRKSKEQMNQFEQEFN.

The polypeptide is Virulence plasmid protein pGP2-D (Chlamydia muridarum (strain MoPn / Nigg)).